The following is a 339-amino-acid chain: Meiotic recombination protein rec7 (339 aa).

Its function is as follows. May be involved primarily in the early steps of meiotic recombination. The sequence is that of Meiotic recombination protein rec7 (rec7) from Schizosaccharomyces pombe (strain 972 / ATCC 24843) (Fission yeast).